Consider the following 243-residue polypeptide: 1-(5-phosphoribosyl)-5-[(5-phosphoribosylamino)methylideneamino] imidazole-4-carboxamide isomerase (243 aa).

Residue Asp-8 is the Proton acceptor of the active site. The active-site Proton donor is the Asp-128.

The protein belongs to the HisA/HisF family.

Its subcellular location is the cytoplasm. It carries out the reaction 1-(5-phospho-beta-D-ribosyl)-5-[(5-phospho-beta-D-ribosylamino)methylideneamino]imidazole-4-carboxamide = 5-[(5-phospho-1-deoxy-D-ribulos-1-ylimino)methylamino]-1-(5-phospho-beta-D-ribosyl)imidazole-4-carboxamide. The protein operates within amino-acid biosynthesis; L-histidine biosynthesis; L-histidine from 5-phospho-alpha-D-ribose 1-diphosphate: step 4/9. This chain is 1-(5-phosphoribosyl)-5-[(5-phosphoribosylamino)methylideneamino] imidazole-4-carboxamide isomerase, found in Opitutus terrae (strain DSM 11246 / JCM 15787 / PB90-1).